A 366-amino-acid chain; its full sequence is Putative F-box protein At3g13624 (366 aa).

Residues Met1 to Gln51 form the F-box domain.

The polypeptide is Putative F-box protein At3g13624 (Arabidopsis thaliana (Mouse-ear cress)).